A 500-amino-acid polypeptide reads, in one-letter code: MPRPADTYTHDQGHLQNCPEYVAWRVAGNGQELAPTNPYNATGRRAFADSYGFDNSNLDLRPDQEVPTMQRIRSTLDMSKYFDEFFDDSLDHKCARVRCRSCGFVRAKNATRQADHLTQCKDFLATDEGEELMASGSLVHNVQQHQPPAIWNGARPHPDLMVRHLSNHPPSGTVPVGPCSRPEPSRASQRPEPPSLAQHLLDQSDDLLTNAVQHSFLAHAGSGSLSENDFNQWLAQIGYISRSLVPFTGALIGKIRIPETGNLEHDSTFRCLDLLCSAVTNMKKELEFLEATKREYGLEVGLDEPRPATKSFIDLFNSASCASATLLEGMVLLWAVEILFYNSFSYAGSFVAQPMPTQERSSFSLPSYSLPSSASPGAYSGQTIRKDRHTTALREAFIKNWKSENFSQFVDVCKSIVDELAMDQMTGNGRADTSACERVFNQAVWLWAQVFPQTTGIRTGHEDSSRDGGRENKAMNRNRSTGNSVEIEDEYNVQTSTQLE.

Disordered stretches follow at residues 161-197 (MVRH…PSLA) and 457-500 (IRTG…TQLE). The span at 459-474 (TGHEDSSRDGGRENKA) shows a compositional bias: basic and acidic residues. The segment covering 475-484 (MNRNRSTGNS) has biased composition (polar residues).

Its subcellular location is the nucleus. The two putative transcription factors FPSE_09188 and FPSE_09189 could be responsible for orchestrating expression of the W493 A and B biosynthesis cluster genes. W493 A and B consist of six amino acid residues D-allo-thr, L-Ala, D-Ala, L-Gln, D-Tyr, and L-Val/L-Ile linked to a 3-hydroxy-4-methyltetradecanoic acid polyketide chain. The polypeptide is Probable transcription factor FPSE_09189 (Fusarium pseudograminearum (strain CS3096) (Wheat and barley crown-rot fungus)).